The chain runs to 366 residues: Glycerol-3-phosphate dehydrogenase [NAD(+)], glycosomal (366 aa).

NAD(+)-binding positions include 22 to 27, Phe97, Lys125, and Ala157; that span reads GSGAFG. Lys125 provides a ligand contact to substrate. Lys210 acts as the Proton acceptor in catalysis. Residues Arg274, Val298, and Glu300 each contribute to the NAD(+) site. Position 274–275 (274–275) interacts with substrate; sequence RN. The Microbody targeting signal motif lies at 364–366; that stretch reads SKL.

Belongs to the NAD-dependent glycerol-3-phosphate dehydrogenase family. Homodimer.

It localises to the glycosome. The enzyme catalyses sn-glycerol 3-phosphate + NAD(+) = dihydroxyacetone phosphate + NADH + H(+). The chain is Glycerol-3-phosphate dehydrogenase [NAD(+)], glycosomal (GPD) from Leishmania mexicana.